Here is a 343-residue protein sequence, read N- to C-terminus: Protein RecA (343 aa).

Position 66 to 73 (66 to 73 (GPESSGKT)) interacts with ATP. The interval 319-343 (IERQIREKHLPKRSAKADEAESAEA) is disordered.

It belongs to the RecA family.

It localises to the cytoplasm. Its function is as follows. Can catalyze the hydrolysis of ATP in the presence of single-stranded DNA, the ATP-dependent uptake of single-stranded DNA by duplex DNA, and the ATP-dependent hybridization of homologous single-stranded DNAs. It interacts with LexA causing its activation and leading to its autocatalytic cleavage. In Thioalkalivibrio sulfidiphilus (strain HL-EbGR7), this protein is Protein RecA.